Reading from the N-terminus, the 122-residue chain is Putative syntaxin 6 (122 aa).

Topologically, residues 1 to 100 (MSNYRYSKLN…AKLTHLEDES (100 aa)) are cytoplasmic. The t-SNARE coiled-coil homology domain occupies 31-93 (EQIIQEQDDE…DTAMKKMAKL (63 aa)). The helical; Anchor for type IV membrane protein transmembrane segment at 101 to 121 (SQCKMIMVLSALLFFLVFVLL) threads the bilayer. A topological domain (extracellular) is located at residue Val-122.

This sequence belongs to the syntaxin family.

Its subcellular location is the membrane. Its function is as follows. SNARE promoting movement of transport vesicles to target membranes. Potentially functions in retrograde trafficking and in the endocytic recycling pathway. In Caenorhabditis elegans, this protein is Putative syntaxin 6 (syx-6).